The primary structure comprises 157 residues: Endoribonuclease YbeY (157 aa).

Zn(2+)-binding residues include H114, H118, and H124.

The protein belongs to the endoribonuclease YbeY family. It depends on Zn(2+) as a cofactor.

It is found in the cytoplasm. Its function is as follows. Single strand-specific metallo-endoribonuclease involved in late-stage 70S ribosome quality control and in maturation of the 3' terminus of the 16S rRNA. This is Endoribonuclease YbeY from Salmonella agona (strain SL483).